The sequence spans 244 residues: Ras-like protein family member 11B (244 aa).

Residues 19–242 (PSSRVIKIAV…VLSAKVRTVT (224 aa)) are small GTPase-like. GTP is bound by residues 30–37 (GGSGVGKT), 77–81 (DTPGV), and 142–145 (NKAD). Residues 200–222 (INATSSVTEKKRSPLIPRPKSPN) form a disordered region.

This sequence belongs to the small GTPase superfamily. Ras family.

The enzyme catalyses GTP + H2O = GDP + phosphate + H(+). This chain is Ras-like protein family member 11B, found in Danio rerio (Zebrafish).